Here is a 271-residue protein sequence, read N- to C-terminus: Formamidopyrimidine-DNA glycosylase (271 aa).

The Schiff-base intermediate with DNA role is filled by P2. E3 serves as the catalytic Proton donor. K57 acts as the Proton donor; for beta-elimination activity in catalysis. DNA is bound by residues H90, R109, and K151. The segment at 236–270 (HVYGRGGETCTQCGNLLSEIRLGQRTTVFCGICQT) adopts an FPG-type zinc-finger fold. Catalysis depends on R260, which acts as the Proton donor; for delta-elimination activity.

It belongs to the FPG family. In terms of assembly, monomer. Zn(2+) is required as a cofactor.

The catalysed reaction is Hydrolysis of DNA containing ring-opened 7-methylguanine residues, releasing 2,6-diamino-4-hydroxy-5-(N-methyl)formamidopyrimidine.. It catalyses the reaction 2'-deoxyribonucleotide-(2'-deoxyribose 5'-phosphate)-2'-deoxyribonucleotide-DNA = a 3'-end 2'-deoxyribonucleotide-(2,3-dehydro-2,3-deoxyribose 5'-phosphate)-DNA + a 5'-end 5'-phospho-2'-deoxyribonucleoside-DNA + H(+). Its function is as follows. Involved in base excision repair of DNA damaged by oxidation or by mutagenic agents. Acts as a DNA glycosylase that recognizes and removes damaged bases. Has a preference for oxidized purines, such as 7,8-dihydro-8-oxoguanine (8-oxoG). Has AP (apurinic/apyrimidinic) lyase activity and introduces nicks in the DNA strand. Cleaves the DNA backbone by beta-delta elimination to generate a single-strand break at the site of the removed base with both 3'- and 5'-phosphates. This is Formamidopyrimidine-DNA glycosylase from Shewanella sp. (strain MR-4).